Consider the following 268-residue polypeptide: Glutamate racemase (268 aa).

Substrate-binding positions include 10–11 and 42–43; these read DS and YG. C73 serves as the catalytic Proton donor/acceptor. A substrate-binding site is contributed by 74 to 75; it reads NT. The active-site Proton donor/acceptor is the C184. 185–186 contacts substrate; it reads TH.

It belongs to the aspartate/glutamate racemases family.

The catalysed reaction is L-glutamate = D-glutamate. Its pathway is cell wall biogenesis; peptidoglycan biosynthesis. Its function is as follows. Provides the (R)-glutamate required for cell wall biosynthesis. This is Glutamate racemase from Carnobacterium sp. (strain St2).